We begin with the raw amino-acid sequence, 551 residues long: Chaperonin GroEL 4 (551 aa).

ATP-binding positions include 30 to 33 (TLGP), lysine 51, 87 to 91 (DGTTT), glycine 415, and aspartate 495.

Belongs to the chaperonin (HSP60) family. Forms a cylinder of 14 subunits composed of two heptameric rings stacked back-to-back. Interacts with the co-chaperonin GroES.

The protein resides in the cytoplasm. It carries out the reaction ATP + H2O + a folded polypeptide = ADP + phosphate + an unfolded polypeptide.. Together with its co-chaperonin GroES, plays an essential role in assisting protein folding. The GroEL-GroES system forms a nano-cage that allows encapsulation of the non-native substrate proteins and provides a physical environment optimized to promote and accelerate protein folding. The chain is Chaperonin GroEL 4 from Mesorhizobium japonicum (strain LMG 29417 / CECT 9101 / MAFF 303099) (Mesorhizobium loti (strain MAFF 303099)).